The sequence spans 252 residues: Bridging integrator 3 homolog (252 aa).

The 224-residue stretch at Gly-8 to Glu-231 folds into the BAR domain. Coiled-coil stretches lie at residues Lys-17–Ser-57, Ser-119–Thr-150, and Glu-224–Arg-244.

It localises to the cytoplasm. It is found in the cytoskeleton. Functionally, involved in cytokinesis and septation where it has a role in the localization of F-actin. This chain is Bridging integrator 3 homolog (bin3), found in Xenopus laevis (African clawed frog).